A 411-amino-acid chain; its full sequence is Adenylosuccinate synthetase (411 aa).

GTP is bound by residues 11–17 (GDEGKGK) and 39–41 (GHT). The active-site Proton acceptor is D12. Mg(2+) is bound by residues D12 and G39. Residues 12 to 15 (DEGK), 37 to 40 (NAGH), T121, R135, Q215, T230, and R294 each bind IMP. Residue H40 is the Proton donor of the active site. Residue 290–296 (TTTKRPR) coordinates substrate. GTP contacts are provided by residues R296, 322 to 324 (KLD), and 400 to 402 (STS).

This sequence belongs to the adenylosuccinate synthetase family. In terms of assembly, homodimer. Mg(2+) is required as a cofactor.

It is found in the cytoplasm. It carries out the reaction IMP + L-aspartate + GTP = N(6)-(1,2-dicarboxyethyl)-AMP + GDP + phosphate + 2 H(+). It participates in purine metabolism; AMP biosynthesis via de novo pathway; AMP from IMP: step 1/2. Plays an important role in the de novo pathway of purine nucleotide biosynthesis. Catalyzes the first committed step in the biosynthesis of AMP from IMP. In Helicobacter pylori (strain G27), this protein is Adenylosuccinate synthetase.